The chain runs to 414 residues: Eukaryotic initiation factor 4A-3 (414 aa).

The Q motif motif lies at Glu41–Gln69. In terms of domain architecture, Helicase ATP-binding spans Ile72–Ile242. Ala85 to Thr92 is an ATP binding site. The DEAD box motif lies at Asp190 to Asp193. Positions Gly253–Leu414 constitute a Helicase C-terminal domain.

It belongs to the DEAD box helicase family. eIF4A subfamily. As to quaternary structure, eIF4F is a multi-subunit complex, the composition of which varies with external and internal environmental conditions. It is composed of at least EIF4A, EIF4E and EIF4G. Interacts with DRM2 (via UBA domains).

The protein localises to the cytoplasm. It is found in the nucleus. The catalysed reaction is ATP + H2O = ADP + phosphate + H(+). Its function is as follows. ATP-dependent RNA helicase which is a subunit of the eIF4F complex involved in cap recognition and is required for mRNA binding to ribosome. In the current model of translation initiation, eIF4A unwinds RNA secondary structures in the 5'-UTR of mRNAs which is necessary to allow efficient binding of the small ribosomal subunit, and subsequent scanning for the initiator codon. This chain is Eukaryotic initiation factor 4A-3, found in Oryza sativa subsp. japonica (Rice).